A 362-amino-acid chain; its full sequence is 3-isopropylmalate dehydrogenase (362 aa).

75–88 (GPKWANLPPTEQPE) contributes to the NAD(+) binding site. Residues arginine 96, arginine 106, arginine 135, and aspartate 224 each coordinate substrate. Residues aspartate 224, aspartate 248, and aspartate 252 each contribute to the Mg(2+) site. An NAD(+)-binding site is contributed by 282–294 (GSAPDIAGLGVAN).

The protein belongs to the isocitrate and isopropylmalate dehydrogenases family. LeuB type 1 subfamily. In terms of assembly, homodimer. The cofactor is Mg(2+). Mn(2+) is required as a cofactor.

It localises to the cytoplasm. The enzyme catalyses (2R,3S)-3-isopropylmalate + NAD(+) = 4-methyl-2-oxopentanoate + CO2 + NADH. The protein operates within amino-acid biosynthesis; L-leucine biosynthesis; L-leucine from 3-methyl-2-oxobutanoate: step 3/4. In terms of biological role, catalyzes the oxidation of 3-carboxy-2-hydroxy-4-methylpentanoate (3-isopropylmalate) to 3-carboxy-4-methyl-2-oxopentanoate. The product decarboxylates to 4-methyl-2 oxopentanoate. This Colwellia psychrerythraea (strain 34H / ATCC BAA-681) (Vibrio psychroerythus) protein is 3-isopropylmalate dehydrogenase.